The chain runs to 64 residues: Small ribosomal subunit protein bS21 (64 aa).

The protein belongs to the bacterial ribosomal protein bS21 family.

The polypeptide is Small ribosomal subunit protein bS21 (Sulfurihydrogenibium sp. (strain YO3AOP1)).